Here is a 239-residue protein sequence, read N- to C-terminus: Ribonuclease PH (239 aa).

Phosphate is bound by residues arginine 87 and 125–127 (GTR).

This sequence belongs to the RNase PH family. Homohexameric ring arranged as a trimer of dimers.

It carries out the reaction tRNA(n+1) + phosphate = tRNA(n) + a ribonucleoside 5'-diphosphate. In terms of biological role, phosphorolytic 3'-5' exoribonuclease that plays an important role in tRNA 3'-end maturation. Removes nucleotide residues following the 3'-CCA terminus of tRNAs; can also add nucleotides to the ends of RNA molecules by using nucleoside diphosphates as substrates, but this may not be physiologically important. Probably plays a role in initiation of 16S rRNA degradation (leading to ribosome degradation) during starvation. In Pseudomonas paraeruginosa (strain DSM 24068 / PA7) (Pseudomonas aeruginosa (strain PA7)), this protein is Ribonuclease PH.